We begin with the raw amino-acid sequence, 573 residues long: Potassium-transporting ATPase potassium-binding subunit (573 aa).

The next 10 membrane-spanning stretches (helical) occupy residues Ala-3–Leu-23, Gly-65–Leu-85, Gly-136–Ile-156, Leu-179–Pro-199, Leu-254–Phe-274, Ala-286–Glu-306, Ala-383–Val-403, Val-423–Val-443, Gly-489–Ala-509, and Leu-531–Ala-551.

It belongs to the KdpA family. The system is composed of three essential subunits: KdpA, KdpB and KdpC.

Its subcellular location is the cell inner membrane. Functionally, part of the high-affinity ATP-driven potassium transport (or Kdp) system, which catalyzes the hydrolysis of ATP coupled with the electrogenic transport of potassium into the cytoplasm. This subunit binds the periplasmic potassium ions and delivers the ions to the membrane domain of KdpB through an intramembrane tunnel. The sequence is that of Potassium-transporting ATPase potassium-binding subunit from Rhodospirillum centenum (strain ATCC 51521 / SW).